A 202-amino-acid polypeptide reads, in one-letter code: Recombination protein RecR (202 aa).

The segment at 59 to 74 adopts a C4-type zinc-finger fold; sequence CSVCFHLSAEPVCEIC. The region spanning 82–176 is the Toprim domain; that stretch reads HTICVVADSR…KVTRIAFGLP (95 aa).

This sequence belongs to the RecR family.

In terms of biological role, may play a role in DNA repair. It seems to be involved in an RecBC-independent recombinational process of DNA repair. It may act with RecF and RecO. The protein is Recombination protein RecR of Thermosynechococcus vestitus (strain NIES-2133 / IAM M-273 / BP-1).